The primary structure comprises 237 residues: Phosphoribosylaminoimidazole-succinocarboxamide synthase (237 aa).

It belongs to the SAICAR synthetase family.

The catalysed reaction is 5-amino-1-(5-phospho-D-ribosyl)imidazole-4-carboxylate + L-aspartate + ATP = (2S)-2-[5-amino-1-(5-phospho-beta-D-ribosyl)imidazole-4-carboxamido]succinate + ADP + phosphate + 2 H(+). Its pathway is purine metabolism; IMP biosynthesis via de novo pathway; 5-amino-1-(5-phospho-D-ribosyl)imidazole-4-carboxamide from 5-amino-1-(5-phospho-D-ribosyl)imidazole-4-carboxylate: step 1/2. The sequence is that of Phosphoribosylaminoimidazole-succinocarboxamide synthase from Baumannia cicadellinicola subsp. Homalodisca coagulata.